We begin with the raw amino-acid sequence, 293 residues long: Fructose-bisphosphate aldolase class 1 (293 aa).

E176 acts as the Proton acceptor in catalysis. K211 (schiff-base intermediate with dihydroxyacetone-P) is an active-site residue.

The protein belongs to the class I fructose-bisphosphate aldolase family.

The catalysed reaction is beta-D-fructose 1,6-bisphosphate = D-glyceraldehyde 3-phosphate + dihydroxyacetone phosphate. Its pathway is carbohydrate degradation; glycolysis; D-glyceraldehyde 3-phosphate and glycerone phosphate from D-glucose: step 4/4. This chain is Fructose-bisphosphate aldolase class 1, found in Porphyromonas gingivalis (strain ATCC 33277 / DSM 20709 / CIP 103683 / JCM 12257 / NCTC 11834 / 2561).